Here is a 309-residue protein sequence, read N- to C-terminus: Homoserine O-acetyltransferase (309 aa).

Cysteine 142 serves as the catalytic Acyl-thioester intermediate. The substrate site is built by lysine 163 and serine 192. The active-site Proton acceptor is the histidine 235. Glutamate 237 is an active-site residue. Position 249 (arginine 249) interacts with substrate.

The protein belongs to the MetA family.

The protein resides in the cytoplasm. The catalysed reaction is L-homoserine + acetyl-CoA = O-acetyl-L-homoserine + CoA. The protein operates within amino-acid biosynthesis; L-methionine biosynthesis via de novo pathway; O-acetyl-L-homoserine from L-homoserine: step 1/1. Functionally, transfers an acetyl group from acetyl-CoA to L-homoserine, forming acetyl-L-homoserine. The chain is Homoserine O-acetyltransferase from Methanomethylophilus alvi (strain Mx1201).